Reading from the N-terminus, the 186-residue chain is MPKRKKQNQPQPPQHLALSERDEPGDEEDERPMGPPSLLGPPPMANGKPGDPKSVFHRGPPGSRGPMIPPLLSLPPPPRGRGHIRGGLGPRSSPYGRGWWGVNTEPPFPGPGHGGPSREIFYQEPRNPRRLKSWSLVKNTYPPKDSPPMMEDKSDRPVCRHFSKKGHCRYEDHCAFYHPGVNGPPL.

A disordered region spans residues 1-97 (MPKRKKQNQP…LGPRSSPYGR (97 aa)). Pro residues-rich tracts occupy residues 33–44 (MGPPSLLGPPPM) and 67–79 (MIPP…PPPR). A C3H1-type zinc finger spans residues 153-181 (KSDRPVCRHFSKKGHCRYEDHCAFYHPGV).

This is Proline-rich protein 3 (Prr3) from Rattus norvegicus (Rat).